The chain runs to 418 residues: Adenylosuccinate synthetase (418 aa).

Residues 12–18 (GDEGKGK) and 40–42 (GHT) each bind GTP. Residue aspartate 13 is the Proton acceptor of the active site. Mg(2+)-binding residues include aspartate 13 and glycine 40. IMP is bound by residues 13–16 (DEGK), 38–41 (NAGH), threonine 128, arginine 142, glutamine 221, threonine 236, and arginine 299. The active-site Proton donor is the histidine 41. 295 to 301 (ATTGRNR) provides a ligand contact to substrate. Residues arginine 301, 327-329 (KAD), and 399-401 (SYG) each bind GTP.

This sequence belongs to the adenylosuccinate synthetase family. In terms of assembly, homodimer. Mg(2+) serves as cofactor.

It localises to the cytoplasm. It catalyses the reaction IMP + L-aspartate + GTP = N(6)-(1,2-dicarboxyethyl)-AMP + GDP + phosphate + 2 H(+). The protein operates within purine metabolism; AMP biosynthesis via de novo pathway; AMP from IMP: step 1/2. Plays an important role in the de novo pathway of purine nucleotide biosynthesis. Catalyzes the first committed step in the biosynthesis of AMP from IMP. The protein is Adenylosuccinate synthetase of Finegoldia magna (strain ATCC 29328 / DSM 20472 / WAL 2508) (Peptostreptococcus magnus).